The primary structure comprises 1503 residues: MDSSTAALATASAKLDAVAQQGSSSWIGFFANIILGIISLVYSILYSVLKLTTFSIPSLLYTLFSTSLTVTMNATTLMLIIVLVFSLVSWFVRYRYLNMYSRLPPEPQRKEPDVDLFPDTHPGGSKPGLSNYLDEFLSAIKIFGYLERPVFHELTRSMQTRKLIAGETFNLEEEKGFCMVVDGLVEIFVKSARTGQHPVGESCSIDSDGSDEHEEYQAGNQRYQLLTEVHNGAPMSSLFSIMSLFTEDIKLRHGGDEGGEPTSATETYTSSRYGLGNDFSDQRESTVSVPTTPQLERSSSHGPTLHDGDANPSMGGRVPASIPPMSLDPPLQSRPKRPTTSRHATTSVHPDIIARATVDTTIAIIPASAFRRLIQIYPKYTAHIVHVILSRFQRVTLATAYNYLGLTSEVLHIEKSMIDNATCQLPNFLRGDALTRLKEKFNHERERIGEKDCTKGIALHNSSTGRRRKSTASLRKEAALQAITHGQRPSSVTASPPLQPRESGNKHTSNSGDLLMNIQLSRNGGRRSTSNMDPLTRQSTLLGSLETEVVSPLSQRTSNPFETRRHAHISLNKRETRDEDGLFRESILECMFKAIGLTANGTGAREPDSADASPRLTSYDQIRRGGYSSHNAFGFIDPYGGSVDGDADSITSGGTGPGLPVNPHALAHDMRDEVEIVFFPSGSVLVEQGERNPGLYYVVDGFLDVCMSAADESSGDILKASKNESSLNIGPGNQQGSAGRDRFMDANLGQSSSRKRASNVRRNVALIKPGGLAGYVGSISSHRSFIDVVAKTDVYVGFLPRQSLERIVDRYPIVLLTMAKRLTNLLPKLILHIDFALEWLQVNAGEVIFHGGEESEAIYIVLNGRLRLVEDRQEGGVDVRGEFGQGESIGELEVLTESARSGTLHAIRNTELVKFPRTLFNSLAQEHPNITIKISKIIASRMRKVVDDPSTFVGKEGALKASLNKSSSTLNLRTVAILPVTSGVPVVEFGNRLMGALTQVGTPNGATSLSQSAILNHLGRHAFNKMGKLKLSQYLADLEEKYGLVMYVADTNVNSPWTQTCITQADCILLVGLAEGSPEIGEYERFMLGMKSTARKVLVLLHADRYAEPGLTRSWLRNRMWINGGHHHVQMAFRTQSVPINPTAKRTGPSLKERVQILQAEIQKYTSRKVRHSPFYSPDAPFKGDFHRLARRLCGKSVGLVLGGGGARGLAHIGIIRAMEESGIPIDIVGGTSIGSFVGALYARHADVVPIFGLSKKFAGRMASVWRFALDLTYPSASYTTGHEFNRGIFKTFGKAQIEDFWLEFYCNTTNISKSRQEIHTSGYAWRYVRASMSLAGLLPPLCDEGSMLLDGGYIDNLTVSHMKSLGVDIIFAVDVGSLDDDVPQAYGDTLSGLWAFVNRWNPLSSTPNPPTLAEIQARLAYVSSVDALERAKMTPGCVYMRPPIDEYGTLEFGRFDEIVQVGYKYGLEFLQKLRDEGALPVVEETEAKKALRRTMAPRRASI.

Topologically, residues 1–25 are cytoplasmic; the sequence is MDSSTAALATASAKLDAVAQQGSSS. A helical transmembrane segment spans residues 26–46; the sequence is WIGFFANIILGIISLVYSILY. The Lumenal portion of the chain corresponds to 47–71; that stretch reads SVLKLTTFSIPSLLYTLFSTSLTVT. The helical transmembrane segment at 72–92 threads the bilayer; sequence MNATTLMLIIVLVFSLVSWFV. Over 93–1503 the chain is Cytoplasmic; it reads RYRYLNMYSR…RTMAPRRASI (1411 aa). Disordered stretches follow at residues 252-348, 454-561, and 722-745; these read RHGG…TTSV, TKGI…SNPF, and KNES…RFMD. Composition is skewed to polar residues over residues 262 to 272, 285 to 302, 487 to 496, 506 to 542, 552 to 561, and 723 to 737; these read TSATETYTSSR, STVS…SSHG, QRPSSVTASP, KHTS…STLL, PLSQRTSNPF, and NESS…QQGS. A nucleoside 3',5'-cyclic phosphate-binding positions include 658 to 777 and 821 to 941; these read GLPV…GYVG and RLTN…IASR. A PNPLA domain is found at 1200 to 1364; it reads LVLGGGGARG…IDNLTVSHMK (165 aa). Residues 1204-1209 carry the GXGXXG motif; the sequence is GGGARG. Positions 1231–1235 match the GXSXG motif; sequence GTSIG. Ser1233 acts as the Nucleophile in catalysis. Residue Asp1351 is the Proton acceptor of the active site. Residues 1351–1353 carry the DGA/G motif; it reads DGG.

Belongs to the NTE family.

It is found in the endoplasmic reticulum membrane. It catalyses the reaction a 1-acyl-sn-glycero-3-phosphocholine + H2O = sn-glycerol 3-phosphocholine + a fatty acid + H(+). Its activity is regulated as follows. Inhibited by organophosphorus esters. Intracellular phospholipase B that catalyzes the double deacylation of phosphatidylcholine (PC) to glycerophosphocholine (GroPCho). Plays an important role in membrane lipid homeostasis. Responsible for the rapid PC turnover in response to inositol, elevated temperatures, or when choline is present in the growth medium. This chain is Lysophospholipase NTE1 (NTE1), found in Pyricularia oryzae (strain 70-15 / ATCC MYA-4617 / FGSC 8958) (Rice blast fungus).